The primary structure comprises 938 residues: Probable outer membrane protein pmp15 (938 aa).

An N-terminal signal peptide occupies residues methionine 1–alanine 17. The region spanning aspartate 659–phenylalanine 938 is the Autotransporter domain.

It belongs to the PMP outer membrane protein family.

It is found in the secreted. It localises to the cell wall. The protein localises to the cell outer membrane. This chain is Probable outer membrane protein pmp15 (pmp15), found in Chlamydia pneumoniae (Chlamydophila pneumoniae).